The chain runs to 115 residues: T cell receptor beta variable 16 (115 aa).

An N-terminal signal peptide occupies residues 1 to 20 (MSPIFTCITILCLLAAGSPG). Residues 21–115 (EEVAQTPKHL…SAVYFCASSQ (95 aa)) enclose the Ig-like domain. Cys-42 and Cys-111 form a disulfide bridge.

In terms of assembly, alpha-beta TR is a heterodimer composed of an alpha and beta chain; disulfide-linked. The alpha-beta TR is associated with the transmembrane signaling CD3 coreceptor proteins to form the TR-CD3 (TcR or TCR). The assembly of alpha-beta TR heterodimers with CD3 occurs in the endoplasmic reticulum where a single alpha-beta TR heterodimer associates with one CD3D-CD3E heterodimer, one CD3G-CD3E heterodimer and one CD247 homodimer forming a stable octameric structure. CD3D-CD3E and CD3G-CD3E heterodimers preferentially associate with TR alpha and TR beta chains, respectively. The association of the CD247 homodimer is the last step of TcR assembly in the endoplasmic reticulum and is required for transport to the cell surface.

Its subcellular location is the cell membrane. In terms of biological role, v region of the variable domain of T cell receptor (TR) beta chain that participates in the antigen recognition. Alpha-beta T cell receptors are antigen specific receptors which are essential to the immune response and are present on the cell surface of T lymphocytes. Recognize peptide-major histocompatibility (MH) (pMH) complexes that are displayed by antigen presenting cells (APC), a prerequisite for efficient T cell adaptive immunity against pathogens. Binding of alpha-beta TR to pMH complex initiates TR-CD3 clustering on the cell surface and intracellular activation of LCK that phosphorylates the ITAM motifs of CD3G, CD3D, CD3E and CD247 enabling the recruitment of ZAP70. In turn ZAP70 phosphorylates LAT, which recruits numerous signaling molecules to form the LAT signalosome. The LAT signalosome propagates signal branching to three major signaling pathways, the calcium, the mitogen-activated protein kinase (MAPK) kinase and the nuclear factor NF-kappa-B (NF-kB) pathways, leading to the mobilization of transcription factors that are critical for gene expression and essential for T cell growth and differentiation. The T cell repertoire is generated in the thymus, by V-(D)-J rearrangement. This repertoire is then shaped by intrathymic selection events to generate a peripheral T cell pool of self-MH restricted, non-autoaggressive T cells. Post-thymic interaction of alpha-beta TR with the pMH complexes shapes TR structural and functional avidity. The protein is T cell receptor beta variable 16 of Homo sapiens (Human).